Consider the following 141-residue polypeptide: Protein archease (141 aa).

Asp19 and Asp140 together coordinate Ca(2+).

The protein belongs to the archease family.

In terms of biological role, activates the tRNA-splicing ligase complex by facilitating the enzymatic turnover of catalytic subunit RtcB. Acts by promoting the guanylylation of RtcB, a key intermediate step in tRNA ligation. Can also alter the NTP specificity of RtcB such that ATP, dGTP or ITP is used efficiently. The polypeptide is Protein archease (Thermoplasma acidophilum (strain ATCC 25905 / DSM 1728 / JCM 9062 / NBRC 15155 / AMRC-C165)).